A 30-amino-acid chain; its full sequence is Thylakoid lumenal 17 kDa protein (30 aa).

It is found in the plastid. The protein localises to the chloroplast thylakoid lumen. The polypeptide is Thylakoid lumenal 17 kDa protein (Spinacia oleracea (Spinach)).